A 106-amino-acid chain; its full sequence is Large ribosomal subunit protein bL21 (106 aa).

This sequence belongs to the bacterial ribosomal protein bL21 family. In terms of assembly, part of the 50S ribosomal subunit. Contacts protein L20.

In terms of biological role, this protein binds to 23S rRNA in the presence of protein L20. The sequence is that of Large ribosomal subunit protein bL21 from Syntrophobacter fumaroxidans (strain DSM 10017 / MPOB).